The sequence spans 143 residues: UPF0251 protein Rru_A1194 (143 aa).

The disordered stretch occupies residues 100-143; sequence LDGSACPNRRQRRGPCARRGAAGALARQTGDEPPSSPTDNEKDD. A compositionally biased stretch (low complexity) spans 116–126; the sequence is ARRGAAGALAR.

The protein belongs to the UPF0251 family.

This is UPF0251 protein Rru_A1194 from Rhodospirillum rubrum (strain ATCC 11170 / ATH 1.1.1 / DSM 467 / LMG 4362 / NCIMB 8255 / S1).